The chain runs to 87 residues: UPF0335 protein RHECIAT_CH0003797 (87 aa).

Belongs to the UPF0335 family.

In Rhizobium etli (strain CIAT 652), this protein is UPF0335 protein RHECIAT_CH0003797.